A 306-amino-acid chain; its full sequence is MAGRYDSNPFEEDDVNPFSEQARGKAGGQPSYGGGAFYMPNPRNVPSVSSNSRLSPLPPEPAAFGATVDIPLDSSKDLKNREKELQAREAELNKREKELKRREEAAARAGIVIEEKNWPPFLPLIHHDITNEIPSHLQRMQYVAFASFLGLACCLFWNVIAVTSAWVKGEGVKIWLLAIIYFISGVPGAYVLWYRPLYNAMRTDSALKFGLFFLVYLFHILFCVFSAVAPPVVFEGKSLAGILPAIDLISKNALVGIFYFVGFGLFCVESLLSIWVIQQVYMYFRGSGKAAEMKRDATRGAMRAAF.

A disordered region spans residues 1–66 (MAGRYDSNPF…LPPEPAAFGA (66 aa)). The Cytoplasmic portion of the chain corresponds to 1 to 141 (MAGRYDSNPF…EIPSHLQRMQ (141 aa)). Residues 25–36 (KAGGQPSYGGGA) show a composition bias toward gly residues. Positions 40–55 (PNPRNVPSVSSNSRLS) are enriched in low complexity. The stretch at 72–109 (LDSSKDLKNREKELQAREAELNKREKELKRREEAAARA) forms a coiled coil. Helical transmembrane passes span 142–162 (YVAF…VIAV), 174–194 (IWLL…VLWY), 209–229 (FGLF…SAVA), and 257–277 (IFYF…IWVI). Residues 278–306 (QQVYMYFRGSGKAAEMKRDATRGAMRAAF) lie on the Cytoplasmic side of the membrane.

Belongs to the SCAMP family.

It localises to the cell membrane. The protein localises to the cytoplasmic vesicle. The protein resides in the secretory vesicle membrane. Functionally, probably involved in membrane trafficking. This chain is Secretory carrier-associated membrane protein 1 (SCAMP1), found in Oryza sativa subsp. japonica (Rice).